The primary structure comprises 198 residues: MSFLEGGVDEAGRGPVVGPMVIAVVVGDGGVLARLGVRDSKRLSPERRERLYQLILEAADCVNYVVVEPAVVDTYVWRGLLNALELDYTAKLIELCPADVYYVDSPDVDPRRYGSALEFITGRRVVAMHKGESVPQVAAASIVAKVVRDRLVALLKKEVGDFGSGYPSDPRTREWLKWGRLPPECVRWSWRTLRGESP.

Positions 3 to 198 constitute an RNase H type-2 domain; sequence FLEGGVDEAG…SWRTLRGESP (196 aa). The a divalent metal cation site is built by aspartate 9, glutamate 10, and aspartate 104.

Belongs to the RNase HII family. It depends on Mn(2+) as a cofactor. Mg(2+) serves as cofactor.

It is found in the cytoplasm. It catalyses the reaction Endonucleolytic cleavage to 5'-phosphomonoester.. In terms of biological role, endonuclease that specifically degrades the RNA of RNA-DNA hybrids. The chain is Ribonuclease HII from Pyrobaculum neutrophilum (strain DSM 2338 / JCM 9278 / NBRC 100436 / V24Sta) (Thermoproteus neutrophilus).